Consider the following 554-residue polypeptide: (E)-beta-caryophyllene synthase (554 aa).

Residues Asp313 and Asp317 each coordinate Mn(2+). A DDXXD motif motif is present at residues 313-317 (DDIYD). Homodimerization regions lie at residues 319–325 (YGTLDEL) and 391–427 (EAQW…LAVI). Asp457 and Glu465 together coordinate Mn(2+).

Belongs to the terpene synthase family. As to quaternary structure, homodimer. Requires Mn(2+) as cofactor. The cofactor is Mg(2+). Expressed in peltate glandular trichomes. Present at low levels in flowers, leaves and stems.

The enzyme catalyses (2E,6E)-farnesyl diphosphate = (-)-(E)-beta-caryophyllene + diphosphate. The catalysed reaction is (2E,6E)-farnesyl diphosphate = alpha-humulene + diphosphate. Its pathway is secondary metabolite biosynthesis; terpenoid biosynthesis. Involved in the biosynthesis of phenolic sesquiterpenes natural products. Sesquiterpene synthase converting (2E,6E)-farnesyl diphosphate (FPP) to (E)-beta-caryophyllene and alpha-humulene. This Origanum vulgare (Wild marjoram) protein is (E)-beta-caryophyllene synthase.